The sequence spans 432 residues: 3-phosphoshikimate 1-carboxyvinyltransferase (432 aa).

Residues Lys22, Ser23, and Arg27 each coordinate 3-phosphoshikimate. Lys22 provides a ligand contact to phosphoenolpyruvate. 2 residues coordinate phosphoenolpyruvate: Gly96 and Arg127. The 3-phosphoshikimate site is built by Ser173, Ser174, Gln175, Ser201, Asp317, Asn340, and Lys344. A phosphoenolpyruvate-binding site is contributed by Gln175. Asp317 serves as the catalytic Proton acceptor. Residues Arg348, Arg392, and Lys417 each coordinate phosphoenolpyruvate.

This sequence belongs to the EPSP synthase family. In terms of assembly, monomer.

It is found in the cytoplasm. The catalysed reaction is 3-phosphoshikimate + phosphoenolpyruvate = 5-O-(1-carboxyvinyl)-3-phosphoshikimate + phosphate. The protein operates within metabolic intermediate biosynthesis; chorismate biosynthesis; chorismate from D-erythrose 4-phosphate and phosphoenolpyruvate: step 6/7. Its function is as follows. Catalyzes the transfer of the enolpyruvyl moiety of phosphoenolpyruvate (PEP) to the 5-hydroxyl of shikimate-3-phosphate (S3P) to produce enolpyruvyl shikimate-3-phosphate and inorganic phosphate. This chain is 3-phosphoshikimate 1-carboxyvinyltransferase, found in Mannheimia haemolytica (Pasteurella haemolytica).